Consider the following 141-residue polypeptide: Large ribosomal subunit protein uL11 (141 aa).

This sequence belongs to the universal ribosomal protein uL11 family. In terms of assembly, part of the ribosomal stalk of the 50S ribosomal subunit. Interacts with L10 and the large rRNA to form the base of the stalk. L10 forms an elongated spine to which L12 dimers bind in a sequential fashion forming a multimeric L10(L12)X complex. Post-translationally, one or more lysine residues are methylated.

Its function is as follows. Forms part of the ribosomal stalk which helps the ribosome interact with GTP-bound translation factors. The sequence is that of Large ribosomal subunit protein uL11 from Lactobacillus delbrueckii subsp. bulgaricus (strain ATCC 11842 / DSM 20081 / BCRC 10696 / JCM 1002 / NBRC 13953 / NCIMB 11778 / NCTC 12712 / WDCM 00102 / Lb 14).